The chain runs to 311 residues: Pyrimidine-specific ribonucleoside hydrolase RihA (311 aa).

Residue H240 is part of the active site.

This sequence belongs to the IUNH family. RihA subfamily.

In terms of biological role, hydrolyzes with equal efficiency cytidine or uridine to ribose and cytosine or uracil, respectively. In Escherichia coli (strain ATCC 8739 / DSM 1576 / NBRC 3972 / NCIMB 8545 / WDCM 00012 / Crooks), this protein is Pyrimidine-specific ribonucleoside hydrolase RihA.